Reading from the N-terminus, the 186-residue chain is Quinone reductase (186 aa).

Residues 13 to 20 (SLRKESYN), 80 to 83 (EYNR), and Ser-116 contribute to the FMN site.

Belongs to the SsuE family. As to quaternary structure, homotetramer. Dimer of dimers. The tetrameric configuration has a central role in chromate reductase activity. FMN is required as a cofactor.

The enzyme catalyses a quinone + NADH + H(+) = a quinol + NAD(+). It catalyses the reaction a quinone + NADPH + H(+) = a quinol + NADP(+). It carries out the reaction Cr(6+) + 2 NADH + O2 = Cr(3+) + superoxide + 2 NAD(+) + 2 H(+). The catalysed reaction is Cr(6+) + 2 NADPH + O2 = Cr(3+) + superoxide + 2 NADP(+) + 2 H(+). Its activity is regulated as follows. May be inhibited by divalent cations. Catalyzes the reduction of quinones. Acts by simultaneous two-electron transfer, avoiding formation of highly reactive semiquinone intermediates and producing quinols that promote tolerance of H(2)O(2). Quinone reduction is probably the primary biological role of ChrR. Can also reduce toxic chromate to insoluble and less toxic Cr(3+). Catalyzes the transfer of three electrons to Cr(6+) producing Cr(3+) and one electron to molecular oxygen. This reaction produces transiently a minimal amount of the toxic Cr(5+) species and reactive oxygen species (ROS). Chromate reduction protects the cell against chromate toxicity, but is likely a secondary activity. Can also reduce potassium ferricyanide and 2,6-dichloroindophenol. During chromate reduction, displays an eightfold preference for NADH over NADPH. This chain is Quinone reductase, found in Pseudomonas putida (strain ATCC 47054 / DSM 6125 / CFBP 8728 / NCIMB 11950 / KT2440).